The sequence spans 424 residues: Serine--tRNA ligase (424 aa).

Position 231 to 233 (231 to 233) interacts with L-serine; sequence TAE. 262 to 264 contacts ATP; it reads RSE. Glutamate 285 serves as a coordination point for L-serine. 349–352 serves as a coordination point for ATP; it reads EISS. L-serine is bound at residue serine 385.

It belongs to the class-II aminoacyl-tRNA synthetase family. Type-1 seryl-tRNA synthetase subfamily. Homodimer. The tRNA molecule binds across the dimer.

Its subcellular location is the cytoplasm. The catalysed reaction is tRNA(Ser) + L-serine + ATP = L-seryl-tRNA(Ser) + AMP + diphosphate + H(+). It carries out the reaction tRNA(Sec) + L-serine + ATP = L-seryl-tRNA(Sec) + AMP + diphosphate + H(+). The protein operates within aminoacyl-tRNA biosynthesis; selenocysteinyl-tRNA(Sec) biosynthesis; L-seryl-tRNA(Sec) from L-serine and tRNA(Sec): step 1/1. Catalyzes the attachment of serine to tRNA(Ser). Is also able to aminoacylate tRNA(Sec) with serine, to form the misacylated tRNA L-seryl-tRNA(Sec), which will be further converted into selenocysteinyl-tRNA(Sec). This is Serine--tRNA ligase from Bacillus anthracis (strain A0248).